We begin with the raw amino-acid sequence, 72 residues long: PAMP-induced secreted peptide 1 (72 aa).

The signal sequence occupies residues 1–30 (MRRVSWSTVLIVVVMVSLFFVEHVVVPAAA). 4-hydroxyproline occurs at positions 65 and 67.

Contains 4-hydroxyproline; hydroxylated on Pro-65 and Pro-67. Expressed in guard cells, hydathodes, leaf trichomes, and vascular tissues of leaves and roots.

Its subcellular location is the secreted. The protein localises to the extracellular space. The protein resides in the apoplast. In terms of biological role, endogenous secreted peptide that acts as elicitor of immune response and positive regulator of defense response. Amplifies the immune response triggered by flg22, the active epitope of bacterial flagellin. Acts as a negative regulator of root growth. The polypeptide is PAMP-induced secreted peptide 1 (Arabidopsis thaliana (Mouse-ear cress)).